A 387-amino-acid polypeptide reads, in one-letter code: Xylose operon regulatory protein (387 aa).

An HTH araC/xylS-type domain is found at I288–N386. DNA-binding regions (H-T-H motif) lie at residues G305–M326 and I353–F376.

Functionally, regulatory protein for the xylBAFGHR operon. This chain is Xylose operon regulatory protein (xylR), found in Haemophilus influenzae (strain ATCC 51907 / DSM 11121 / KW20 / Rd).